The primary structure comprises 234 residues: Flagellar L-ring protein (234 aa).

The N-terminal stretch at 1–15 (MRYAVICMLLLAASG) is a signal peptide. Cys-16 carries the N-palmitoyl cysteine lipid modification. Cys-16 is lipidated: S-diacylglycerol cysteine.

This sequence belongs to the FlgH family. As to quaternary structure, the basal body constitutes a major portion of the flagellar organelle and consists of four rings (L,P,S, and M) mounted on a central rod.

It is found in the cell outer membrane. It localises to the bacterial flagellum basal body. Its function is as follows. Assembles around the rod to form the L-ring and probably protects the motor/basal body from shearing forces during rotation. The sequence is that of Flagellar L-ring protein from Oleidesulfovibrio alaskensis (strain ATCC BAA-1058 / DSM 17464 / G20) (Desulfovibrio alaskensis).